We begin with the raw amino-acid sequence, 433 residues long: MKALTELFSKLVEKIRDVEYIDEATLQEIAREIQRTLLKADVPLDLVKTFTDNAVKRIREEKPPAGIPPREYLIYVLYEELVKLMGGEQPAEFKPTKKPYIVLLLGVEGSGKTTTSAKLARYLMKRGYKVGMVETDTIRPAAFDQLRQLAEKIGAPFYGERDGKDAVEIARRGVANLKGVDVLIIDTAGRHRNEEALLQEVKAIYDAVNPDEVVLVVDATVGKLAAAQAEAFMKYLPIHTVIITKMDSTARGGGALAAVAKTGARVKFIGVGEDVEELEPFNPRKFVARLLGMGDLDALLEKIKAVFEEEEVLEEIESGRLDLLTFKKQIDSLMKLGPLSKVFQLLPGGLAAKISEEQIELSQKNLKKWRAILSSMTMEELKNPDILNASRIRRIALGAGVTPKDVKEMLTVYENLKKMSKTLKRQMRLRMAR.

Residues 106 to 113 (GVEGSGKT), 186 to 190 (DTAGR), and 244 to 247 (TKMD) contribute to the GTP site.

The protein belongs to the GTP-binding SRP family. SRP54 subfamily. In terms of assembly, part of the signal recognition particle protein translocation system, which is composed of SRP and FtsY. Archaeal SRP consists of a 7S RNA molecule of 300 nucleotides and two protein subunits: SRP54 and SRP19.

The protein localises to the cytoplasm. The catalysed reaction is GTP + H2O = GDP + phosphate + H(+). Its function is as follows. Involved in targeting and insertion of nascent membrane proteins into the cytoplasmic membrane. Binds to the hydrophobic signal sequence of the ribosome-nascent chain (RNC) as it emerges from the ribosomes. The SRP-RNC complex is then targeted to the cytoplasmic membrane where it interacts with the SRP receptor FtsY. In Pyrobaculum arsenaticum (strain DSM 13514 / JCM 11321 / PZ6), this protein is Signal recognition particle 54 kDa protein.